We begin with the raw amino-acid sequence, 109 residues long: Short-chain dehydrogenase/reductase homolog YusS (109 aa).

This sequence belongs to the short-chain dehydrogenases/reductases (SDR) family.

The protein is Short-chain dehydrogenase/reductase homolog YusS (yusS) of Bacillus subtilis (strain 168).